Reading from the N-terminus, the 925-residue chain is Probable replication restart protein PriA (925 aa).

Residues Cys-645, Cys-648, Cys-654, Cys-657, Cys-672, Cys-675, Cys-685, and Cys-688 each contribute to the Zn(2+) site.

This sequence belongs to the helicase family. PriA subfamily. As to quaternary structure, interacts with DnaB (DR_0549). Component of the replication restart primosome. Zn(2+) is required as a cofactor.

Functionally, initiates the restart of stalled replication forks, which reloads the replicative helicase on sites other than the origin of replication. Recognizes abandoned replication forks and remodels them to uncover a helicase loading site. Promotes assembly of the primosome at these replication forks. Recognizes and binds DNA at stalled replication forks, also binds single-stranded (ss)DNA. This is Probable replication restart protein PriA from Deinococcus radiodurans (strain ATCC 13939 / DSM 20539 / JCM 16871 / CCUG 27074 / LMG 4051 / NBRC 15346 / NCIMB 9279 / VKM B-1422 / R1).